A 508-amino-acid polypeptide reads, in one-letter code: tRNA (guanine(37)-N(1))-methyltransferase (508 aa).

The N-terminal 53 residues, 1 to 53, are a transit peptide targeting the mitochondrion; sequence MKFNFWKGLWKPKSLTPTLSHRLYRRMYTPQPPLNREMTVLDRSKFTVSLNLA. H253 lines the S-adenosyl-L-methionine pocket. Basic and acidic residues predominate over residues 267–284; the sequence is RERKQQERAKRENHEKST. The interval 267–291 is disordered; sequence RERKQQERAKRENHEKSTETAVEPD. S-adenosyl-L-methionine contacts are provided by residues 323–324, 351–352, and N402; these read DL and DG.

Belongs to the class I-like SAM-binding methyltransferase superfamily. TRM5/TYW2 family. As to quaternary structure, monomer.

Its subcellular location is the mitochondrion matrix. It is found in the nucleus. The protein localises to the cytoplasm. The catalysed reaction is guanosine(37) in tRNA + S-adenosyl-L-methionine = N(1)-methylguanosine(37) in tRNA + S-adenosyl-L-homocysteine + H(+). Specifically methylates the N1 position of guanosine-37 in various cytoplasmic and mitochondrial tRNAs. Methylation is not dependent on the nature of the nucleoside 5' of the target nucleoside. This is the first step in the biosynthesis of wybutosine (yW), a modified base adjacent to the anticodon of tRNAs and required for accurate decoding. In Yarrowia lipolytica (strain CLIB 122 / E 150) (Yeast), this protein is tRNA (guanine(37)-N(1))-methyltransferase.